The chain runs to 290 residues: Pyridoxal 5'-phosphate synthase subunit PdxS (290 aa).

Asp22 contacts D-ribose 5-phosphate. Catalysis depends on Lys79, which acts as the Schiff-base intermediate with D-ribose 5-phosphate. Residue Gly151 participates in D-ribose 5-phosphate binding. Arg163 contacts D-glyceraldehyde 3-phosphate. Residues Gly212 and 233 to 234 (GS) contribute to the D-ribose 5-phosphate site.

It belongs to the PdxS/SNZ family. As to quaternary structure, in the presence of PdxT, forms a dodecamer of heterodimers.

It carries out the reaction aldehydo-D-ribose 5-phosphate + D-glyceraldehyde 3-phosphate + L-glutamine = pyridoxal 5'-phosphate + L-glutamate + phosphate + 3 H2O + H(+). The protein operates within cofactor biosynthesis; pyridoxal 5'-phosphate biosynthesis. Catalyzes the formation of pyridoxal 5'-phosphate from ribose 5-phosphate (RBP), glyceraldehyde 3-phosphate (G3P) and ammonia. The ammonia is provided by the PdxT subunit. Can also use ribulose 5-phosphate and dihydroxyacetone phosphate as substrates, resulting from enzyme-catalyzed isomerization of RBP and G3P, respectively. In Clostridium botulinum (strain Loch Maree / Type A3), this protein is Pyridoxal 5'-phosphate synthase subunit PdxS.